Consider the following 163-residue polypeptide: Putative H/ACA ribonucleoprotein complex subunit 2-like protein (163 aa).

The interval 1-27 is disordered; it reads MGKRNLDETMNESTVSEANGDATAPTT.

Belongs to the eukaryotic ribosomal protein eL8 family. In terms of assembly, component of the small nucleolar ribonucleoprotein particle containing H/ACA-type snoRNAs (H/ACA snoRNPs).

The protein localises to the nucleus. Its subcellular location is the nucleolus. Functionally, required for ribosome biogenesis. Part of a complex which catalyzes pseudouridylation of rRNA. This involves the isomerization of uridine such that the ribose is subsequently attached to C5, instead of the normal N1. Pseudouridine ('psi') residues may serve to stabilize the conformation of rRNAs. This Caenorhabditis elegans protein is Putative H/ACA ribonucleoprotein complex subunit 2-like protein.